The following is a 593-amino-acid chain: MLO-like protein 8 (593 aa).

The Extracellular portion of the chain corresponds to 1-46; it reads MGIIDGSLLRRLICLCLWCLLGGGVTVVTAEDEKKVVHKQLNQTPT. Residues 47-67 traverse the membrane as a helical segment; it reads WAVAAVCTFFIVVSVLLEKLL. Over 68–92 the chain is Cytoplasmic; that stretch reads HKVGKVLWDRHKTALLDALEKIKAE. A helical membrane pass occupies residues 93 to 113; sequence LMVLGFISLLLTFGQTYILDI. Residues 114–181 lie on the Extracellular side of the membrane; the sequence is CIPSHVARTM…ISAEALHQLH (68 aa). Residues 182 to 202 form a helical membrane-spanning segment; it reads ILIFFLAIFHVLYSFLTMMLG. Over 203-304 the chain is Cytoplasmic; sequence RLKIRGWKHW…IKRSLEDDFK (102 aa). The helical transmembrane segment at 305–325 threads the bilayer; it reads VVVGVSPVLWGSFVLFLLLNI. Position 326 (aspartate 326) is a topological domain, extracellular. Residues 327–347 form a helical membrane-spanning segment; the sequence is GFKMMFIGTAIPVIIILAVGT. Residues 348–393 lie on the Cytoplasmic side of the membrane; it reads KLQAIMTRMALGITDRHAVVQGMPLVQGNDEYFWFGRPHLILHLMH. Residues 394-414 traverse the membrane as a helical segment; the sequence is FALFQNAFQITYFFWIWYSFG. Over 415-430 the chain is Extracellular; it reads SDSCYHPNFKIALVKV. The chain crosses the membrane as a helical span at residues 431–451; that stretch reads AIALGVLCLCSYITLPLYALV. At 452-593 the chain is on the cytoplasmic side; the sequence is TQMGSRMKKS…APSNESSQDR (142 aa). The calmodulin-binding stretch occupies residues 465–486; sequence EQTSKALKKWRMAVKKKKGVKA. Residues 481-593 form a disordered region; that stretch reads KKGVKATTKR…APSNESSQDR (113 aa). A compositionally biased stretch (low complexity) spans 489–512; that stretch reads KRLGGDGSASPTASTVRSTSSVRS. The span at 528–539 shows a compositional bias: acidic residues; that stretch reads LDPETSDLDTDN. The segment covering 567 to 579 has biased composition (basic and acidic residues); that stretch reads TSRDTETDSKEFS.

Belongs to the MLO family.

It is found in the membrane. May be involved in modulation of pathogen defense and leaf cell death. Activity seems to be regulated by Ca(2+)-dependent calmodulin binding and seems not to require heterotrimeric G proteins. The sequence is that of MLO-like protein 8 (MLO8) from Arabidopsis thaliana (Mouse-ear cress).